Consider the following 155-residue polypeptide: MFSMIRGPRAAFGTLIGQWRRGMMTTGNRRLCIKPQEGPSASPQTQRPGFKLPGYRPSDWDKKMLMWSGRFKTVEQIPEFVSFEMIDAARNRVRVKACYIMMGLTIFACLVMIVSGKKAVSRKESLIAINMEKKAKWREDAQREKEENALDAKAQ.

Residues 95-114 (VKACYIMMGLTIFACLVMIV) form a helical membrane-spanning segment.

The protein belongs to the UPF0389 family.

The protein resides in the membrane. This chain is Protein FAM162B (fam162b), found in Danio rerio (Zebrafish).